The sequence spans 681 residues: Spermatogenesis-associated protein 21 (681 aa).

Over residues 1 to 14 the composition is skewed to basic and acidic residues; that stretch reads MENRNTHTHPESKA. 2 disordered regions span residues 1–284 and 298–336; these read MENR…ANSR and EEATHRRTLKSRGLTARRSPKTVTSVSTSGPISSSVPTL. Composition is skewed to polar residues over residues 83-94 and 159-173; these read QEPSARPRTTQD and PSNSRSQPLKNNSPS. The segment covering 251–261 has biased composition (basic and acidic residues); sequence PEERDTEKKEL. Over residues 264–281 the composition is skewed to polar residues; it reads GQKQRQQALSAAGTQGPA. Residues 319–335 are compositionally biased toward low complexity; the sequence is TVTSVSTSGPISSSVPT. Residues 464-499 enclose the EF-hand domain; sequence FTPAQVEEALMSADVNGDGHVDFKDFLAVMTDTKRF. Residues aspartate 477, asparagine 479, aspartate 481, histidine 483, and aspartate 488 each coordinate Ca(2+). The segment at 653 to 681 is disordered; the sequence is LFFQPGQQGSREHSSDSRKWLSSMPARTH. Residues 662 to 671 are compositionally biased toward basic and acidic residues; that stretch reads SREHSSDSRK.

Involved in the differentiation of haploid spermatids. In Mus musculus (Mouse), this protein is Spermatogenesis-associated protein 21 (Spata21).